Here is a 511-residue protein sequence, read N- to C-terminus: GMP synthase [glutamine-hydrolyzing] (511 aa).

Positions 5-195 constitute a Glutamine amidotransferase type-1 domain; the sequence is DILVLDFGSQ…AKYACNCESV (191 aa). Cys-82 acts as the Nucleophile in catalysis. Catalysis depends on residues His-169 and Glu-171. One can recognise a GMPS ATP-PPase domain in the interval 196–386; the sequence is WNMGSFAKTQ…LGLSKEVVYR (191 aa). 223–229 serves as a coordination point for ATP; sequence SGGVDSS.

As to quaternary structure, homodimer.

It catalyses the reaction XMP + L-glutamine + ATP + H2O = GMP + L-glutamate + AMP + diphosphate + 2 H(+). It participates in purine metabolism; GMP biosynthesis; GMP from XMP (L-Gln route): step 1/1. Catalyzes the synthesis of GMP from XMP. This is GMP synthase [glutamine-hydrolyzing] from Campylobacter jejuni subsp. jejuni serotype O:23/36 (strain 81-176).